Reading from the N-terminus, the 156-residue chain is SsrA-binding protein (156 aa).

It belongs to the SmpB family.

It is found in the cytoplasm. Its function is as follows. Required for rescue of stalled ribosomes mediated by trans-translation. Binds to transfer-messenger RNA (tmRNA), required for stable association of tmRNA with ribosomes. tmRNA and SmpB together mimic tRNA shape, replacing the anticodon stem-loop with SmpB. tmRNA is encoded by the ssrA gene; the 2 termini fold to resemble tRNA(Ala) and it encodes a 'tag peptide', a short internal open reading frame. During trans-translation Ala-aminoacylated tmRNA acts like a tRNA, entering the A-site of stalled ribosomes, displacing the stalled mRNA. The ribosome then switches to translate the ORF on the tmRNA; the nascent peptide is terminated with the 'tag peptide' encoded by the tmRNA and targeted for degradation. The ribosome is freed to recommence translation, which seems to be the essential function of trans-translation. Required for trans-translation. Probably required for sporulation; deletion of the gene for tmRNA impairs sporulation via its effect on trans-translation, and as smpB is required for trans-translation under non-stress conditions, it is also probably required during sporulation. In Bacillus subtilis (strain 168), this protein is SsrA-binding protein.